The following is a 279-amino-acid chain: tRNA uridine(34) hydroxylase (279 aa).

The region spanning 126 to 221 (TKPGMHVIDT…YLQSVKGADS (96 aa)) is the Rhodanese domain. Cys-181 acts as the Cysteine persulfide intermediate in catalysis.

Belongs to the TrhO family.

The catalysed reaction is uridine(34) in tRNA + AH2 + O2 = 5-hydroxyuridine(34) in tRNA + A + H2O. Functionally, catalyzes oxygen-dependent 5-hydroxyuridine (ho5U) modification at position 34 in tRNAs. The protein is tRNA uridine(34) hydroxylase of Anaplasma phagocytophilum (strain HZ).